The primary structure comprises 122 residues: NADH-quinone oxidoreductase subunit A (122 aa).

The next 3 membrane-spanning stretches (helical) occupy residues 12–32 (ILLF…AGWL), 67–87 (IAIL…WAVV), and 91–111 (IGWF…VGFI).

This sequence belongs to the complex I subunit 3 family. NDH-1 is composed of 14 different subunits. Subunits NuoA, H, J, K, L, M, N constitute the membrane sector of the complex.

The protein localises to the cell inner membrane. It carries out the reaction a quinone + NADH + 5 H(+)(in) = a quinol + NAD(+) + 4 H(+)(out). Functionally, NDH-1 shuttles electrons from NADH, via FMN and iron-sulfur (Fe-S) centers, to quinones in the respiratory chain. The immediate electron acceptor for the enzyme in this species is believed to be ubiquinone. Couples the redox reaction to proton translocation (for every two electrons transferred, four hydrogen ions are translocated across the cytoplasmic membrane), and thus conserves the redox energy in a proton gradient. In Nitrosomonas europaea (strain ATCC 19718 / CIP 103999 / KCTC 2705 / NBRC 14298), this protein is NADH-quinone oxidoreductase subunit A.